Reading from the N-terminus, the 20-residue chain is L-amino-acid oxidase L2 (20 aa).

It belongs to the flavin monoamine oxidase family. FIG1 subfamily. As to quaternary structure, monomer. This is in contrast with most of its orthologs, that are non-covalently linked homodimers. It depends on FAD as a cofactor. In terms of processing, N-glycosylated. In terms of tissue distribution, expressed by the venom gland.

It localises to the secreted. It catalyses the reaction an L-alpha-amino acid + O2 + H2O = a 2-oxocarboxylate + H2O2 + NH4(+). The catalysed reaction is L-leucine + O2 + H2O = 4-methyl-2-oxopentanoate + H2O2 + NH4(+). The enzyme catalyses L-phenylalanine + O2 + H2O = 3-phenylpyruvate + H2O2 + NH4(+). It carries out the reaction L-tryptophan + O2 + H2O = indole-3-pyruvate + H2O2 + NH4(+). It catalyses the reaction L-methionine + O2 + H2O = 4-methylsulfanyl-2-oxobutanoate + H2O2 + NH4(+). The catalysed reaction is L-isoleucine + O2 + H2O = (S)-3-methyl-2-oxopentanoate + H2O2 + NH4(+). The enzyme catalyses L-tyrosine + O2 + H2O = 3-(4-hydroxyphenyl)pyruvate + H2O2 + NH4(+). Its function is as follows. Catalyzes an oxidative deamination of predominantly hydrophobic and aromatic L-amino acids, thus producing hydrogen peroxide that may contribute to the diverse toxic effects of this enzyme. Is active on L-Ile, L-Leu, L-Met, L-Phe, L-Trp, and L-Tyr. Exhibits diverse biological activities, such as hemorrhage, hemolysis, edema, apoptosis of vascular endothelial cells or tumor cell lines, antibacterial and antiparasitic activities, as well as regulation of platelet aggregation. Its effect on platelets is controversial, since it either induces aggregation or inhibits agonist-induced aggregation. These different effects are probably due to different experimental conditions. This chain is L-amino-acid oxidase L2, found in Daboia russelii (Russel's viper).